A 509-amino-acid polypeptide reads, in one-letter code: Mitogen-activated protein kinase sma-5 (509 aa).

Residues 19–72 (DPITSMSPPQENRSPKAEYLNNFFNTNPTNGKSRGSQEAPRKPLGQTNLNVQGS) are disordered. Composition is skewed to polar residues over residues 20 to 30 (PITSMSPPQEN) and 40 to 54 (NFFNTNPTNGKSRGS). The region spanning 105 to 411 (YEPTQNIGSG…IQDALLHPYI (307 aa)) is the Protein kinase domain. Residues 111–119 (IGSGAFGIV) and lysine 134 contribute to the ATP site. Aspartate 231 (proton acceptor) is an active-site residue. A disordered region spans residues 460–482 (YSELHSGDSTGSTSDMSTNTSGE). The span at 466-481 (GDSTGSTSDMSTNTSG) shows a compositional bias: low complexity.

The protein belongs to the protein kinase superfamily. CMGC Ser/Thr protein kinase family. MAP kinase subfamily. Mg(2+) is required as a cofactor. Expressed in intestine with a stronger expression in the four most anterior cells, muscles, excretory cell, pharynx and, to a lesser extent, in hypodermis.

It carries out the reaction L-seryl-[protein] + ATP = O-phospho-L-seryl-[protein] + ADP + H(+). It catalyses the reaction L-threonyl-[protein] + ATP = O-phospho-L-threonyl-[protein] + ADP + H(+). Serine/threonine-protein kinase involved in the postembryonic regulation of body size, mainly through control of cell growth. In particular, controls the volume of intestine, muscles and hypodermis. In addition, regulates growth, intestinal granule distribution, lifespan and number of offspring. The polypeptide is Mitogen-activated protein kinase sma-5 (Caenorhabditis elegans).